The sequence spans 398 residues: Lysophosphatidylserine lipase ABHD12 (398 aa).

Basic and acidic residues predominate over residues 1–15 (MRKRTEPVTLEHERC). The disordered stretch occupies residues 1-24 (MRKRTEPVTLEHERCAASGSSSSG). Topologically, residues 1-74 (MRKRTEPVTL…RKSLWFRLRK (74 aa)) are cytoplasmic. Residues 75 to 95 (ILLCVLGFYIAIPFLVKLCPG) traverse the membrane as a helical segment. Residues 96–398 (IQAKLIFLNF…LGKSEPERQH (303 aa)) are Extracellular-facing. Asn-123 is a glycosylation site (N-linked (GlcNAc...) asparagine). The Nucleophile role is filled by Ser-246. Residues Asp-333 and His-372 each act as charge relay system in the active site.

This sequence belongs to the serine esterase family.

It is found in the endoplasmic reticulum membrane. The enzyme catalyses 1-(9Z-octadecenoyl)-sn-glycero-3-phospho-L-serine + H2O = sn-glycero-3-phospho-L-serine + (9Z)-octadecenoate + H(+). The catalysed reaction is 1-(9Z-octadecenoyl)-sn-glycero-3-phospho-(1'-sn-glycerol) + H2O = sn-glycero-3-phospho-(1'-sn-glycerol) + (9Z)-octadecenoate + H(+). It carries out the reaction 1-(9Z-octadecenoyl)-sn-glycero-3-phospho-(1D-myo-inositol) + H2O = sn-glycero-3-phospho-1D-myo-inositol + (9Z)-octadecenoate + H(+). It catalyses the reaction 1-(9Z-octadecenoyl)-sn-glycero-3-phosphoethanolamine + H2O = sn-glycero-3-phosphoethanolamine + (9Z)-octadecenoate + H(+). The enzyme catalyses 1-(9Z-octadecenoyl)-sn-glycero-3-phosphocholine + H2O = 1-(9Z-octadecenoyl)-sn-glycerol + phosphocholine + H(+). The catalysed reaction is 2-(9Z-octadecenoyl)-glycerol + H2O = glycerol + (9Z)-octadecenoate + H(+). It carries out the reaction 1-hexadecanoyl-sn-glycero-3-phospho-L-serine + H2O = sn-glycero-3-phospho-L-serine + hexadecanoate + H(+). It catalyses the reaction 2-(5Z,8Z,11Z,14Z-eicosatetraenoyl)-glycerol + H2O = glycerol + (5Z,8Z,11Z,14Z)-eicosatetraenoate + H(+). The enzyme catalyses Hydrolyzes glycerol monoesters of long-chain fatty acids.. The catalysed reaction is 1-decanoylglycerol + H2O = decanoate + glycerol + H(+). It carries out the reaction 1-dodecanoylglycerol + H2O = dodecanoate + glycerol + H(+). It catalyses the reaction 1-tetradecanoylglycerol + H2O = tetradecanoate + glycerol + H(+). The enzyme catalyses 2-hexadecanoylglycerol + H2O = glycerol + hexadecanoate + H(+). The catalysed reaction is 1-(9Z-octadecenoyl)-glycerol + H2O = glycerol + (9Z)-octadecenoate + H(+). It carries out the reaction 2-(9Z,12Z-octadecadienoyl)-glycerol + H2O = (9Z,12Z)-octadecadienoate + glycerol + H(+). It catalyses the reaction 1-(5Z,8Z,11Z,14Z-eicosatetraenoyl)-glycerol + H2O = glycerol + (5Z,8Z,11Z,14Z)-eicosatetraenoate + H(+). The enzyme catalyses 1-(9Z,12Z-octadecadienoyl)-glycerol + H2O = (9Z,12Z)-octadecadienoate + glycerol + H(+). The catalysed reaction is 1-hexadecanoylglycerol + H2O = glycerol + hexadecanoate + H(+). It carries out the reaction 1-octadecanoylglycerol + H2O = octadecanoate + glycerol + H(+). It catalyses the reaction 1-octadecanoyl-2-(9,10-epoxyoctadecanoyl)-sn-glycero-3-phospho-L-serine + H2O = 9,10-epoxyoctadecanoate + 1-octadecanoyl-sn-glycero-3-phosphoserine + H(+). The enzyme catalyses 1-octadecanoyl-2-(10-hydroxyoctadecanoyl)-sn-glycero-3-phospho-L-serine + H2O = 1-octadecanoyl-sn-glycero-3-phosphoserine + 10-hydroxyoctadecanoate + H(+). The catalysed reaction is 1-hexadecanoyl-2-(10-hydroxyoctadecanoyl)-sn-glycero-3-phospho-L-serine + H2O = 10-hydroxyoctadecanoate + 1-hexadecanoyl-sn-glycero-3-phospho-L-serine + H(+). Its function is as follows. Lysophosphatidylserine (LPS) lipase that mediates the hydrolysis of lysophosphatidylserine, a class of signaling lipids that regulates immunological and neurological processes. Represents a major lysophosphatidylserine lipase in the brain, thereby playing a key role in the central nervous system. Also able to hydrolyze oxidized phosphatidylserine; oxidized phosphatidylserine is produced in response to severe inflammatory stress and constitutes a proapoptotic 'eat me' signal. Also has monoacylglycerol (MAG) lipase activity: hydrolyzes 2-arachidonoylglycerol (2-AG), thereby acting as a regulator of endocannabinoid signaling pathways. Has a strong preference for very-long-chain lipid substrates; substrate specificity is likely due to improved catalysis and not improved substrate binding. The polypeptide is Lysophosphatidylserine lipase ABHD12 (Rattus norvegicus (Rat)).